The chain runs to 308 residues: N-acetylmuramic acid 6-phosphate etherase (308 aa).

The SIS domain occupies 63–226 (IVDAFACGGR…STASMIRSGK (164 aa)). Catalysis depends on E91, which acts as the Proton donor. Residue E122 is part of the active site.

This sequence belongs to the GCKR-like family. MurNAc-6-P etherase subfamily. In terms of assembly, homodimer.

The catalysed reaction is N-acetyl-D-muramate 6-phosphate + H2O = N-acetyl-D-glucosamine 6-phosphate + (R)-lactate. The protein operates within amino-sugar metabolism; 1,6-anhydro-N-acetylmuramate degradation. It functions in the pathway amino-sugar metabolism; N-acetylmuramate degradation. Its pathway is cell wall biogenesis; peptidoglycan recycling. Functionally, specifically catalyzes the cleavage of the D-lactyl ether substituent of MurNAc 6-phosphate, producing GlcNAc 6-phosphate and D-lactate. Together with AnmK, is also required for the utilization of anhydro-N-acetylmuramic acid (anhMurNAc) either imported from the medium or derived from its own cell wall murein, and thus plays a role in cell wall recycling. This chain is N-acetylmuramic acid 6-phosphate etherase, found in Colwellia psychrerythraea (strain 34H / ATCC BAA-681) (Vibrio psychroerythus).